The primary structure comprises 481 residues: Tryptophan 5-hydroxylase (481 aa).

The region spanning 56–131 (SVIFSLKNEI…NVISMSPPEN (76 aa)) is the ACT domain. The L-tryptophan site is built by tyrosine 272, arginine 294, and threonine 302. Positions 309, 314, and 354 each coordinate Fe cation. Residues serine 373 and isoleucine 403 each coordinate L-tryptophan.

This sequence belongs to the biopterin-dependent aromatic amino acid hydroxylase family. Homotetramer. Fe(2+) is required as a cofactor.

The enzyme catalyses (6R)-L-erythro-5,6,7,8-tetrahydrobiopterin + L-tryptophan + O2 = 5-hydroxy-L-tryptophan + (4aS,6R)-4a-hydroxy-L-erythro-5,6,7,8-tetrahydrobiopterin. The protein operates within aromatic compound metabolism; serotonin biosynthesis; serotonin from L-tryptophan: step 1/2. Its function is as follows. Oxidizes L-tryptophan to 5-hydroxy-l-tryptophan in the rate-determining step of serotonin biosynthesis. In Xenopus laevis (African clawed frog), this protein is Tryptophan 5-hydroxylase (tph1).